The sequence spans 274 residues: Oxidized low-density lipoprotein receptor 1 (274 aa).

Positions 1–28 are disordered; the sequence is MTLDDLKSNSMKDQPDEKSNGDKAEGPR. The Cytoplasmic portion of the chain corresponds to 1–37; it reads MTLDDLKSNSMKDQPDEKSNGDKAEGPRSLSTLRWRP. The span at 13 to 26 shows a compositional bias: basic and acidic residues; the sequence is DQPDEKSNGDKAEG. The helical; Signal-anchor for type II membrane protein transmembrane segment at 38–60 threads the bilayer; sequence AALILGLLCLGLLVTVILLIIQL. A lipid anchor (S-palmitoyl cysteine) is attached at Cys46. The segment at 61-150 is neck; sequence SQVSDLLKQQ…SGPCPQDWLW (90 aa). Residues 61–274 are Extracellular-facing; that stretch reads SQVSDLLKQQ…QKRANLLRAQ (214 aa). Residues 89-142 adopt a coiled-coil conformation; it reads RQAEKSSQESQRELTEMIETLAHKLDEKSKKLMELQQQNLNLQKALEKAANFSG. A glycan (N-linked (GlcNAc...) asparagine) is linked at Asn139. Intrachain disulfides connect Cys144–Cys155, Cys172–Cys264, and Cys243–Cys256. A C-type lectin domain is found at 151–265; the sequence is HEENCYKFSS…CILNAFSICQ (115 aa).

In terms of assembly, homodimer; disulfide-linked. May form a hexamer composed of 3 homodimers. Interacts with HSP70. In terms of processing, N-glycosylated.

The protein localises to the cell membrane. It localises to the membrane raft. It is found in the secreted. In terms of biological role, receptor that mediates the recognition, internalization and degradation of oxidatively modified low density lipoprotein (oxLDL) by vascular endothelial cells. OxLDL is a marker of atherosclerosis that induces vascular endothelial cell activation and dysfunction, resulting in pro-inflammatory responses, pro-oxidative conditions and apoptosis. Its association with oxLDL induces the activation of NF-kappa-B through an increased production of intracellular reactive oxygen and a variety of pro-atherogenic cellular responses including a reduction of nitric oxide (NO) release, monocyte adhesion and apoptosis. In addition to binding oxLDL, it acts as a receptor for the HSP70 protein involved in antigen cross-presentation to naive T-cells in dendritic cells, thereby participating in cell-mediated antigen cross-presentation. Also involved in inflammatory process, by acting as a leukocyte-adhesion molecule at the vascular interface in endotoxin-induced inflammation. Also acts as a receptor for advanced glycation end (AGE) products, activated platelets, monocytes, apoptotic cells and both Gram-negative and Gram-positive bacteria. This chain is Oxidized low-density lipoprotein receptor 1 (OLR1), found in Sus scrofa (Pig).